A 512-amino-acid chain; its full sequence is Glutathione-binding protein GsiB (512 aa).

Positions 1-26 (MARAVHRSGLVALGIATALMASCAFA) are cleaved as a signal peptide.

The protein belongs to the bacterial solute-binding protein 5 family. As to quaternary structure, the complex is composed of two ATP-binding proteins (GsiA), two transmembrane proteins (GsiC and GsiD) and a solute-binding protein (GsiB). In the presence of glutathione, interacts with the transmembrane proteins GsiC and GsiD.

It is found in the periplasm. In terms of biological role, part of the ABC transporter complex GsiABCD involved in glutathione import. Binds glutathione. In Escherichia coli (strain K12), this protein is Glutathione-binding protein GsiB.